A 466-amino-acid chain; its full sequence is MAKTLYEKLFDAHVVFEAPNETPLLYIDRHLVHEVTSPQAFDGLRAHHRPVRQPGKTFATMDHNVSTQTKDINASGEMARIQMQELIKNCNEFGVELYDLNHPYQGIVHVMGPEQGVTLPGMTIVCGDSHTATHGAFGALAFGIGTSEVEHVLATQTLKQGRAKTMKIEVTGSAAPGITAKDIVLAIIGKTGSAGGTGHVVEFCGDAIRALSMEGRMTLCNMAIEMGAKAGLVAPDETTFNYVKGRLHAPKGCDFDEAVEYWKTLKTDDGATFDTVVTLRAEEIAPQVTWGTNPGQVISVTDIIPDPASFSDPVERASAEKALAYMGLQPGVPLTDVAIDKVFIGSCTNSRIEDLRAAAEVAKGRKVAPGVQALVVPGSGPVKAQAEAEGLDKIFIEAGFEWRLPGCSMCLAMNNDRLNPGERCASTSNRNFEGRQGRGGRTHLVSPAMAAAAAVTGHFADIRSIK.

The [4Fe-4S] cluster site is built by Cys347, Cys407, and Cys410.

It belongs to the aconitase/IPM isomerase family. LeuC type 1 subfamily. Heterodimer of LeuC and LeuD. [4Fe-4S] cluster is required as a cofactor.

The catalysed reaction is (2R,3S)-3-isopropylmalate = (2S)-2-isopropylmalate. It participates in amino-acid biosynthesis; L-leucine biosynthesis; L-leucine from 3-methyl-2-oxobutanoate: step 2/4. In terms of biological role, catalyzes the isomerization between 2-isopropylmalate and 3-isopropylmalate, via the formation of 2-isopropylmaleate. The polypeptide is 3-isopropylmalate dehydratase large subunit (Salmonella paratyphi A (strain ATCC 9150 / SARB42)).